A 225-amino-acid polypeptide reads, in one-letter code: N-(5'-phosphoribosyl)anthranilate isomerase (225 aa).

The protein belongs to the TrpF family.

It catalyses the reaction N-(5-phospho-beta-D-ribosyl)anthranilate = 1-(2-carboxyphenylamino)-1-deoxy-D-ribulose 5-phosphate. Its pathway is amino-acid biosynthesis; L-tryptophan biosynthesis; L-tryptophan from chorismate: step 3/5. In Nitrobacter winogradskyi (strain ATCC 25391 / DSM 10237 / CIP 104748 / NCIMB 11846 / Nb-255), this protein is N-(5'-phosphoribosyl)anthranilate isomerase.